A 181-amino-acid chain; its full sequence is Nucleoside-triphosphatase THEP1 (181 aa).

ATP contacts are provided by residues 12 to 19 (GPVGSIKS) and 104 to 111 (VIVIDEIG).

This sequence belongs to the THEP1 NTPase family.

The catalysed reaction is a ribonucleoside 5'-triphosphate + H2O = a ribonucleoside 5'-diphosphate + phosphate + H(+). Its function is as follows. Has nucleotide phosphatase activity towards ATP, GTP, CTP, TTP and UTP. May hydrolyze nucleoside diphosphates with lower efficiency. The chain is Nucleoside-triphosphatase THEP1 from Thermoplasma acidophilum (strain ATCC 25905 / DSM 1728 / JCM 9062 / NBRC 15155 / AMRC-C165).